The chain runs to 395 residues: Peptide-N(4)-(N-acetyl-beta-glucosaminyl)asparagine amidase (395 aa).

Residues cysteine 131, cysteine 134, cysteine 172, and cysteine 175 each contribute to the Zn(2+) site. The active-site Nucleophile is the cysteine 198. Catalysis depends on residues histidine 232 and aspartate 249. Glutamate 252 is a binding site for substrate. The tract at residues 363–395 (PELTKTTPSTDLPSGRQSGSTEWTKSRGENGES) is disordered. The segment covering 366–385 (TKTTPSTDLPSGRQSGSTEW) has biased composition (polar residues). Residues 386–395 (TKSRGENGES) show a composition bias toward basic and acidic residues.

Belongs to the transglutaminase-like superfamily. PNGase family. Zn(2+) serves as cofactor.

It is found in the cytoplasm. The enzyme catalyses Hydrolysis of an N(4)-(acetyl-beta-D-glucosaminyl)asparagine residue in which the glucosamine residue may be further glycosylated, to yield a (substituted) N-acetyl-beta-D-glucosaminylamine and a peptide containing an aspartate residue.. In terms of biological role, specifically deglycosylates the denatured form of N-linked glycoproteins in the cytoplasm and assists their proteasome-mediated degradation. Cleaves the beta-aspartyl-glucosamine (GlcNAc) of the glycan and the amide side chain of Asn, converting Asn to Asp. Prefers proteins containing high-mannose over those bearing complex type oligosaccharides. Can recognize misfolded proteins in the endoplasmic reticulum that are exported to the cytosol to be destroyed and deglycosylate them, while it has no activity toward native proteins. Deglycosylation is a prerequisite for subsequent proteasome-mediated degradation of some, but not all, misfolded glycoproteins. The chain is Peptide-N(4)-(N-acetyl-beta-glucosaminyl)asparagine amidase (PNG1) from Candida albicans (strain SC5314 / ATCC MYA-2876) (Yeast).